Here is a 430-residue protein sequence, read N- to C-terminus: Histidine--tRNA ligase (430 aa).

This sequence belongs to the class-II aminoacyl-tRNA synthetase family. Homodimer.

It is found in the cytoplasm. It carries out the reaction tRNA(His) + L-histidine + ATP = L-histidyl-tRNA(His) + AMP + diphosphate + H(+). This is Histidine--tRNA ligase from Chlorobium limicola (strain DSM 245 / NBRC 103803 / 6330).